The sequence spans 488 residues: Prostaglandin E2 receptor EP4 subtype (488 aa).

At 1-19 the chain is on the extracellular side; it reads MSIPGVNASFSSTPERLNS. The N-linked (GlcNAc...) asparagine glycan is linked to Asn7. The chain crosses the membrane as a helical span at residues 20-43; sequence PVTIPAVMFIFGVVGNLVAIVVLC. At 44-55 the chain is on the cytoplasmic side; that stretch reads KSRKEQKETTFY. Residues 56–79 traverse the membrane as a helical segment; that stretch reads TLVCGLAVTDLLGTLLVSPVTIAT. Residues 80–96 are Extracellular-facing; sequence YMKGQWPGDQALCDYST. A disulfide bridge links Cys92 with Cys170. The helical transmembrane segment at 97–115 threads the bilayer; sequence FILLFFGLSGLSIICAMSI. Residues 116–135 lie on the Cytoplasmic side of the membrane; that stretch reads ERYLAINHAYFYSHYVDKRL. Residues 136-160 traverse the membrane as a helical segment; that stretch reads AGLTLFAVYASNVLFCALPNMGLGR. The Extracellular portion of the chain corresponds to 161–184; that stretch reads SERQYPGTWCFIDWTTNVTAYAAF. Residues 185-211 traverse the membrane as a helical segment; that stretch reads SYMYAGFSSFLILATVLCNVLVCGALL. Over 212–270 the chain is Cytoplasmic; that stretch reads RMLRQFMRRTSLGTEQHHAAAAAAVASVACRGHAAASPALQRLSDFRRRRSFRRIAGAE. A helical transmembrane segment spans residues 271–298; sequence IQMVILLIATSLVVLICSIPLVVRVFIN. At 299-315 the chain is on the extracellular side; sequence QLYQPSVVKDISRNPDL. A helical membrane pass occupies residues 316 to 335; the sequence is QAIRIASVNPILDPWIYILL. The Cytoplasmic portion of the chain corresponds to 336-488; sequence RKTVLSKAIE…ETLKLSEKCI (153 aa). Residues 358–380 are disordered; it reads GRDGSAQHCSESRRTSSAMSGHS. A phosphoserine mark is found at Ser377, Ser380, Ser382, and Ser385.

It belongs to the G-protein coupled receptor 1 family. As to quaternary structure, interacts with FEM1A. In terms of processing, phosphorylation mediates agonist-mediated desensitization by promoting cytoplasmic retention.

It is found in the cell membrane. In terms of biological role, receptor for prostaglandin E2 (PGE2). The activity of this receptor is mediated by G(s) proteins that stimulate adenylate cyclase. Has a relaxing effect on smooth muscle. May play an important role in regulating renal hemodynamics, intestinal epithelial transport, adrenal aldosterone secretion, and uterine function. The polypeptide is Prostaglandin E2 receptor EP4 subtype (Ptger4) (Rattus norvegicus (Rat)).